The sequence spans 338 residues: Limbic system-associated membrane protein (338 aa).

An N-terminal signal peptide occupies residues M1–P28. 3 consecutive Ig-like C2-type domains span residues V29 to S122, P132 to T214, and P219 to Y306. N-linked (GlcNAc...) asparagine glycans are attached at residues N40, N66, N136, and N148. A disulfide bridge links C53 with C111. 2 cysteine pairs are disulfide-bonded: C153–C197 and C239–C290. 4 N-linked (GlcNAc...) asparagine glycosylation sites follow: N279, N287, N300, and N315. A lipid anchor (GPI-anchor amidated asparagine) is attached at N315. Residues G316 to C338 constitute a propeptide, removed in mature form.

It belongs to the immunoglobulin superfamily. IgLON family.

The protein localises to the cell membrane. Its function is as follows. Mediates selective neuronal growth and axon targeting. Probably serves as a recognition molecule for the formation of limbic connections. This chain is Limbic system-associated membrane protein, found in Gallus gallus (Chicken).